A 95-amino-acid polypeptide reads, in one-letter code: Small ribosomal subunit protein uS17 (95 aa).

Belongs to the universal ribosomal protein uS17 family. In terms of assembly, part of the 30S ribosomal subunit.

In terms of biological role, one of the primary rRNA binding proteins, it binds specifically to the 5'-end of 16S ribosomal RNA. This Psychrobacter sp. (strain PRwf-1) protein is Small ribosomal subunit protein uS17.